We begin with the raw amino-acid sequence, 119 residues long: U-scoloptoxin(16)-Er11a (119 aa).

A signal peptide spans 1-19 (MKSWTAAVLSLGLIYLSIS).

The protein belongs to the scoloptoxin-16 family. In terms of processing, contains 4 disulfide bonds. In terms of tissue distribution, expressed by the venom gland.

It is found in the secreted. This Ethmostigmus rubripes (Giant centipede) protein is U-scoloptoxin(16)-Er11a.